Consider the following 920-residue polypeptide: Isoleucine--tRNA ligase (920 aa).

A 'HIGH' region motif is present at residues 58-68 (PYANGHLHLGH). Position 569 (Glu569) interacts with L-isoleucyl-5'-AMP. The 'KMSKS' region signature appears at 610 to 614 (KMSKS). Lys613 contributes to the ATP binding site. Zn(2+) contacts are provided by Cys895, Cys898, Cys910, and Cys913.

The protein belongs to the class-I aminoacyl-tRNA synthetase family. IleS type 1 subfamily. In terms of assembly, monomer. The cofactor is Zn(2+).

It is found in the cytoplasm. It carries out the reaction tRNA(Ile) + L-isoleucine + ATP = L-isoleucyl-tRNA(Ile) + AMP + diphosphate. Functionally, catalyzes the attachment of isoleucine to tRNA(Ile). As IleRS can inadvertently accommodate and process structurally similar amino acids such as valine, to avoid such errors it has two additional distinct tRNA(Ile)-dependent editing activities. One activity is designated as 'pretransfer' editing and involves the hydrolysis of activated Val-AMP. The other activity is designated 'posttransfer' editing and involves deacylation of mischarged Val-tRNA(Ile). This chain is Isoleucine--tRNA ligase, found in Helicobacter pylori (strain P12).